Here is a 272-residue protein sequence, read N- to C-terminus: 3-deoxy-manno-octulosonate cytidylyltransferase (272 aa).

This sequence belongs to the KdsB family.

Its subcellular location is the cytoplasm. The catalysed reaction is 3-deoxy-alpha-D-manno-oct-2-ulosonate + CTP = CMP-3-deoxy-beta-D-manno-octulosonate + diphosphate. Its pathway is nucleotide-sugar biosynthesis; CMP-3-deoxy-D-manno-octulosonate biosynthesis; CMP-3-deoxy-D-manno-octulosonate from 3-deoxy-D-manno-octulosonate and CTP: step 1/1. It participates in bacterial outer membrane biogenesis; lipopolysaccharide biosynthesis. Its function is as follows. Activates KDO (a required 8-carbon sugar) for incorporation into bacterial lipopolysaccharide in Gram-negative bacteria. In Verminephrobacter eiseniae (strain EF01-2), this protein is 3-deoxy-manno-octulosonate cytidylyltransferase.